The following is a 137-amino-acid chain: Basic phospholipase A2 beta-bungarotoxin A1 chain (137 aa).

Residues 1–9 (AVCVSLLGA) form the signal peptide. The propeptide occupies 10-17 (ANIPPHPL). Intrachain disulfides connect C44–C136, C46–C62, C61–C117, C68–C110, C78–C103, and C96–C108. Ca(2+) is bound by residues Y45, G47, and G49. H65 is a catalytic residue. D66 lines the Ca(2+) pocket. Residue D111 is part of the active site.

It belongs to the phospholipase A2 family. Group I subfamily. D49 sub-subfamily. As to quaternary structure, heterodimer; disulfide-linked. The A chain has phospholipase A2 activity and the B chain shows homology with the basic protease inhibitors. Ca(2+) is required as a cofactor. Expressed by the venom gland.

The protein localises to the secreted. The catalysed reaction is a 1,2-diacyl-sn-glycero-3-phosphocholine + H2O = a 1-acyl-sn-glycero-3-phosphocholine + a fatty acid + H(+). Snake venom phospholipase A2 (PLA2) that shows presynaptic neurotoxicity. The A chain has phospholipase activity. PLA2 catalyzes the calcium-dependent hydrolysis of the 2-acyl groups in 3-sn-phosphoglycerides. The sequence is that of Basic phospholipase A2 beta-bungarotoxin A1 chain from Bungarus candidus (Malayan krait).